The following is a 215-amino-acid chain: ATP-dependent Clp protease proteolytic subunit (215 aa).

Ser-116 functions as the Nucleophile in the catalytic mechanism. Residue His-141 is part of the active site.

Belongs to the peptidase S14 family. Fourteen ClpP subunits assemble into 2 heptameric rings which stack back to back to give a disk-like structure with a central cavity, resembling the structure of eukaryotic proteasomes.

It is found in the cytoplasm. The enzyme catalyses Hydrolysis of proteins to small peptides in the presence of ATP and magnesium. alpha-casein is the usual test substrate. In the absence of ATP, only oligopeptides shorter than five residues are hydrolyzed (such as succinyl-Leu-Tyr-|-NHMec, and Leu-Tyr-Leu-|-Tyr-Trp, in which cleavage of the -Tyr-|-Leu- and -Tyr-|-Trp bonds also occurs).. Functionally, cleaves peptides in various proteins in a process that requires ATP hydrolysis. Has a chymotrypsin-like activity. Plays a major role in the degradation of misfolded proteins. The chain is ATP-dependent Clp protease proteolytic subunit from Psychrobacter cryohalolentis (strain ATCC BAA-1226 / DSM 17306 / VKM B-2378 / K5).